The sequence spans 540 residues: Intestinal-type alkaline phosphatase 1 (540 aa).

The first 20 residues, 1 to 20 (MQGDWVLLLLLGLRIHLSFG), serve as a signal peptide directing secretion. Aspartate 62 provides a ligand contact to Mg(2+). The Zn(2+) site is built by aspartate 62 and serine 112. The Phosphoserine intermediate role is filled by serine 112. An intrachain disulfide couples cysteine 141 to cysteine 203. A glycan (N-linked (GlcNAc...) asparagine) is linked at asparagine 142. Serine 175 serves as a coordination point for Mg(2+). Ca(2+)-binding residues include glutamate 236, phenylalanine 289, and glutamate 290. The N-linked (GlcNAc...) asparagine glycan is linked to asparagine 301. Aspartate 305 contacts Ca(2+). Glutamate 331 contributes to the Mg(2+) binding site. Residues aspartate 336, histidine 340, aspartate 377, and histidine 378 each contribute to the Zn(2+) site. An N-linked (GlcNAc...) asparagine glycan is attached at asparagine 428. Histidine 452 is a Zn(2+) binding site. Cysteine 487 and cysteine 494 are oxidised to a cystine. Asparagine 511 carries the GPI-anchor amidated asparagine lipid modification. A propeptide spans 512–540 (SAITMNNVLLSLQLLVSMLLLVGTALVVS) (removed in mature form).

It belongs to the alkaline phosphatase family. In terms of assembly, homodimer. The cofactor is Mg(2+). It depends on Zn(2+) as a cofactor. Ca(2+) is required as a cofactor.

The protein resides in the cell membrane. It carries out the reaction a phosphate monoester + H2O = an alcohol + phosphate. In terms of biological role, alkaline phosphatase that can hydrolyze various phosphate compounds. The polypeptide is Intestinal-type alkaline phosphatase 1 (Alpi) (Rattus norvegicus (Rat)).